The chain runs to 180 residues: Translation initiation factor IF-3 (180 aa).

The protein belongs to the IF-3 family. In terms of assembly, monomer.

The protein localises to the cytoplasm. Functionally, IF-3 binds to the 30S ribosomal subunit and shifts the equilibrium between 70S ribosomes and their 50S and 30S subunits in favor of the free subunits, thus enhancing the availability of 30S subunits on which protein synthesis initiation begins. This Pectobacterium atrosepticum (strain SCRI 1043 / ATCC BAA-672) (Erwinia carotovora subsp. atroseptica) protein is Translation initiation factor IF-3.